An 811-amino-acid chain; its full sequence is Glycerol-3-phosphate acyltransferase (811 aa).

The HXXXXD motif motif lies at 305–310 (CHRSHI).

The protein belongs to the GPAT/DAPAT family.

The protein resides in the cell inner membrane. It carries out the reaction sn-glycerol 3-phosphate + an acyl-CoA = a 1-acyl-sn-glycero-3-phosphate + CoA. The protein operates within phospholipid metabolism; CDP-diacylglycerol biosynthesis; CDP-diacylglycerol from sn-glycerol 3-phosphate: step 1/3. This is Glycerol-3-phosphate acyltransferase from Histophilus somni (strain 129Pt) (Haemophilus somnus).